Here is a 322-residue protein sequence, read N- to C-terminus: HPr kinase/phosphorylase (322 aa).

Residues His-146 and Lys-167 contribute to the active site. An ATP-binding site is contributed by 161 to 168 (GDSGLGKS). Ser-168 contacts Mg(2+). The active-site Proton acceptor; for phosphorylation activity. Proton donor; for dephosphorylation activity is Asp-185. Positions 209–218 (LEVRGLGLLD) are important for the catalytic mechanism of both phosphorylation and dephosphorylation. Glu-210 is a binding site for Mg(2+). The active site involves Arg-250. The interval 271–276 (QVAAGR) is important for the catalytic mechanism of dephosphorylation.

The protein belongs to the HPrK/P family. As to quaternary structure, homohexamer. Mg(2+) is required as a cofactor.

The enzyme catalyses [HPr protein]-L-serine + ATP = [HPr protein]-O-phospho-L-serine + ADP + H(+). It catalyses the reaction [HPr protein]-O-phospho-L-serine + phosphate + H(+) = [HPr protein]-L-serine + diphosphate. Catalyzes the ATP- as well as the pyrophosphate-dependent phosphorylation of a specific serine residue in HPr, a phosphocarrier protein of the phosphoenolpyruvate-dependent sugar phosphotransferase system (PTS). HprK/P also catalyzes the pyrophosphate-producing, inorganic phosphate-dependent dephosphorylation (phosphorolysis) of seryl-phosphorylated HPr (P-Ser-HPr). The protein is HPr kinase/phosphorylase of Burkholderia ambifaria (strain ATCC BAA-244 / DSM 16087 / CCUG 44356 / LMG 19182 / AMMD) (Burkholderia cepacia (strain AMMD)).